Here is a 509-residue protein sequence, read N- to C-terminus: Nucleoprotein (509 aa).

The interval methionine 1–alanine 404 is ncore. RNA contacts are provided by lysine 180, arginine 195, tyrosine 260, tyrosine 350, and arginine 354. A ntail region spans residues asparagine 405–isoleucine 509. The interval glycine 452–proline 477 is disordered. Residues methionine 458–threonine 469 show a composition bias toward acidic residues.

This sequence belongs to the paramyxoviruses nucleocapsid family. As to quaternary structure, homomultimer; forms the nucleocapsid. Binds to the viral genomic RNA. N0 interacts with the phosphoprotein (via N-terminus); this interaction allows P to chaperon N0 to avoid N polymerization before encapsidation. Interacts as N-RNA template with the phosphoprotein (via C-terminus); this interaction positions the polymerase on the template.

The protein localises to the virion. The protein resides in the host cytoplasm. Functionally, forms the helical nucleocapsid (NC), protecting the genome from nucleases. The encapsidated genomic RNA serves as template for transcription and replication; encapsidation by N is coupled to RNA synthesis. Forms the encapsidation complex with the phosphoprotein protein P. Before encapsidation, the newly synthesized free N protein, so-called N0, is chaperoned by P. This Canis lupus familiaris (Dog) protein is Nucleoprotein (NP).